Here is a 150-residue protein sequence, read N- to C-terminus: Ribosome-binding factor A (150 aa).

Positions 131–150 (LSHDDDEDGGADEAPRNGDE) are disordered.

It belongs to the RbfA family. In terms of assembly, monomer. Binds 30S ribosomal subunits, but not 50S ribosomal subunits or 70S ribosomes.

The protein localises to the cytoplasm. One of several proteins that assist in the late maturation steps of the functional core of the 30S ribosomal subunit. Associates with free 30S ribosomal subunits (but not with 30S subunits that are part of 70S ribosomes or polysomes). Required for efficient processing of 16S rRNA. May interact with the 5'-terminal helix region of 16S rRNA. In Brucella melitensis biotype 2 (strain ATCC 23457), this protein is Ribosome-binding factor A.